The following is a 250-amino-acid chain: MTIKEVKELLSTDVTEDQLAELEKDPRVGVQKLIISYRKKQAKLLAKKQAFLERFSYEKQFWQKGELVAGVDEVGRGPLAGPVVTAAVIIDHNFDLLEVNDSKKLSPEKRLQLYPKILSEAVSVGIGVKSAAVIDQINIYEADRQAMAQAVKALDVKPNALLVDAMNVPVDLPQIELIKGDAKSNSIAAASIVAKVFRDKLMDDYDKIYPQYGFPRNAGYGTKEHIDALKKYGPTPIHRKTFAPVSDFFK.

In terms of domain architecture, RNase H type-2 spans 66–250 (ELVAGVDEVG…TFAPVSDFFK (185 aa)). 3 residues coordinate a divalent metal cation: D72, E73, and D164.

It belongs to the RNase HII family. It depends on Mn(2+) as a cofactor. Mg(2+) is required as a cofactor.

The protein resides in the cytoplasm. It carries out the reaction Endonucleolytic cleavage to 5'-phosphomonoester.. Its function is as follows. Endonuclease that specifically degrades the RNA of RNA-DNA hybrids. The sequence is that of Ribonuclease HII from Lactobacillus helveticus (strain DPC 4571).